The following is a 523-amino-acid chain: tRNA-2-methylthio-N(6)-dimethylallyladenosine synthase (523 aa).

Residues Met-1–Leu-26 form a disordered region. Positions Glu-8–Ser-17 are enriched in polar residues. Residues Arg-80–Met-198 form the MTTase N-terminal domain. Residues Cys-89, Cys-125, Cys-159, Cys-235, Cys-239, and Cys-242 each coordinate [4Fe-4S] cluster. Residues Arg-221–Lys-451 form the Radical SAM core domain. The region spanning Lys-454–Asn-517 is the TRAM domain.

The protein belongs to the methylthiotransferase family. MiaB subfamily. In terms of assembly, monomer. Requires [4Fe-4S] cluster as cofactor.

The protein resides in the cytoplasm. It carries out the reaction N(6)-dimethylallyladenosine(37) in tRNA + (sulfur carrier)-SH + AH2 + 2 S-adenosyl-L-methionine = 2-methylsulfanyl-N(6)-dimethylallyladenosine(37) in tRNA + (sulfur carrier)-H + 5'-deoxyadenosine + L-methionine + A + S-adenosyl-L-homocysteine + 2 H(+). In terms of biological role, catalyzes the methylthiolation of N6-(dimethylallyl)adenosine (i(6)A), leading to the formation of 2-methylthio-N6-(dimethylallyl)adenosine (ms(2)i(6)A) at position 37 in tRNAs that read codons beginning with uridine. The chain is tRNA-2-methylthio-N(6)-dimethylallyladenosine synthase from Geobacillus thermodenitrificans (strain NG80-2).